Here is a 220-residue protein sequence, read N- to C-terminus: Eukaryotic translation initiation factor 3 subunit B (220 aa).

The tract at residues 1–94 is sufficient for interaction with HCR1 and TIF32; the sequence is MPEPIAFDES…LIIELDSAAA (94 aa). Positions 1–220 are sufficient for interaction with PIC8; that stretch reads MPEPIAFDES…GVQAWGGERI (220 aa). In terms of domain architecture, RRM spans 37 to 120; sequence HFVICDGAPI…HRLAVNKLPD (84 aa).

Belongs to the eIF-3 subunit B family. Component of the eukaryotic translation initiation factor 3 (eIF-3) complex.

Its subcellular location is the cytoplasm. Its function is as follows. RNA-binding component of the eukaryotic translation initiation factor 3 (eIF-3) complex, which is involved in protein synthesis of a specialized repertoire of mRNAs and, together with other initiation factors, stimulates binding of mRNA and methionyl-tRNAi to the 40S ribosome. The eIF-3 complex specifically targets and initiates translation of a subset of mRNAs involved in cell proliferation. This Pichia angusta (Yeast) protein is Eukaryotic translation initiation factor 3 subunit B (TIF32).